Reading from the N-terminus, the 365-residue chain is Green-sensitive opsin P521 (365 aa).

At 1-51 the chain is on the extracellular side; sequence MTEAWNVAVFAARRSRDDDDTTRGSVFTYTNTNNTRGPFEGPNYHIAPRWV. N33 carries N-linked (GlcNAc...) asparagine glycosylation. Residues 52-76 form a helical membrane-spanning segment; it reads YNLVSFFMIIVVIASCFTNGLVLVA. Residues 77 to 88 are Cytoplasmic-facing; it reads TAKFKKLRHPLN. A helical transmembrane segment spans residues 89–113; sequence WILVNLAFVDLVETLVASTISVFNQ. Over 114-128 the chain is Extracellular; sequence IFGYFILGHPLCVIE. Cysteines 125 and 202 form a disulfide. The chain crosses the membrane as a helical span at residues 129-148; it reads GYVVSSCGITGLWSLAIISW. At 149-167 the chain is on the cytoplasmic side; it reads ERWFVVCKPFGNIKFDSKL. Residues 168–191 traverse the membrane as a helical segment; the sequence is AIIGIVFSWVWAWGWSAPPIFGWS. Residues 192-217 are Extracellular-facing; it reads RYWPHGLKTSCGPDVFSGSVELGCQS. The chain crosses the membrane as a helical span at residues 218–245; it reads FMLTLMITCCFLPLFIIIVCYLQVWMAI. Topologically, residues 246 to 267 are cytoplasmic; that stretch reads RAVAAQQKESESTQKAEREVSR. A helical transmembrane segment spans residues 268 to 291; the sequence is MVVVMIVAFCICWGPYASFVSFAA. At 292 to 299 the chain is on the extracellular side; that stretch reads ANPGYAFH. Residues 300 to 324 traverse the membrane as a helical segment; it reads PLAAALPAYFAKSATIYNPVIYVFM. Position 311 is an N6-(retinylidene)lysine (K311). Residues 325–365 lie on the Cytoplasmic side of the membrane; the sequence is NRQFRNCIMQLFGKKVDDGSEASTTSRTEVSSVSNSSVAPA. Residues 342–365 are disordered; that stretch reads DGSEASTTSRTEVSSVSNSSVAPA. A compositionally biased stretch (low complexity) spans 345–365; the sequence is EASTTSRTEVSSVSNSSVAPA.

This sequence belongs to the G-protein coupled receptor 1 family. Opsin subfamily. In terms of processing, phosphorylated on some or all of the serine and threonine residues present in the C-terminal region. As to expression, in this lizard the color pigments are found in the rod-shaped photoreceptor cells which have been derived from ancestral cone-like photoreceptors.

It is found in the membrane. In terms of biological role, visual pigments are the light-absorbing molecules that mediate vision. They consist of an apoprotein, opsin, covalently linked to cis-retinal. This chain is Green-sensitive opsin P521, found in Gekko gecko (Tokay gecko).